A 241-amino-acid chain; its full sequence is Ribonuclease P protein component 3 (241 aa).

This sequence belongs to the eukaryotic/archaeal RNase P protein component 3 family. Consists of a catalytic RNA component and at least 4-5 protein subunits.

The protein resides in the cytoplasm. It catalyses the reaction Endonucleolytic cleavage of RNA, removing 5'-extranucleotides from tRNA precursor.. Its function is as follows. Part of ribonuclease P, a protein complex that generates mature tRNA molecules by cleaving their 5'-ends. The sequence is that of Ribonuclease P protein component 3 from Methanococcoides burtonii (strain DSM 6242 / NBRC 107633 / OCM 468 / ACE-M).